The sequence spans 198 residues: Ribosome maturation factor RimP (198 aa).

It belongs to the RimP family.

It is found in the cytoplasm. Functionally, required for maturation of 30S ribosomal subunits. The polypeptide is Ribosome maturation factor RimP (Rhizobium rhizogenes (strain K84 / ATCC BAA-868) (Agrobacterium radiobacter)).